The primary structure comprises 231 residues: DNA damage response protein C (231 aa).

As to quaternary structure, homodimer.

Its subcellular location is the cytoplasm. The protein resides in the nucleoid. Functionally, appears to contribute to D.radiodurans capacity to survive exposure to ionizing radiation. Likely functions as a DNA damage-induced nucleoid-associated protein (NAP) that contributes to the enhanced level of nucleoid compaction after irradiation by bridging DNA duplexes, thereby limiting the dispersion of the fragmented genome immediately after irradiation to facilitate subsequent DNA repair. In vitro, binds both ssDNA and dsDNA, and is able to compact circular DNA, circularize linear DNA, anneal complementary DNA strands and protect DNA from nucleases. In Deinococcus radiodurans (strain ATCC 13939 / DSM 20539 / JCM 16871 / CCUG 27074 / LMG 4051 / NBRC 15346 / NCIMB 9279 / VKM B-1422 / R1), this protein is DNA damage response protein C.